Here is a 259-residue protein sequence, read N- to C-terminus: tRNA pseudouridine synthase A (259 aa).

Asp-51 acts as the Nucleophile in catalysis. A substrate-binding site is contributed by Tyr-109.

Belongs to the tRNA pseudouridine synthase TruA family. As to quaternary structure, homodimer.

It catalyses the reaction uridine(38/39/40) in tRNA = pseudouridine(38/39/40) in tRNA. Formation of pseudouridine at positions 38, 39 and 40 in the anticodon stem and loop of transfer RNAs. In Colwellia psychrerythraea (strain 34H / ATCC BAA-681) (Vibrio psychroerythus), this protein is tRNA pseudouridine synthase A.